Consider the following 369-residue polypeptide: Isopentenyl-diphosphate delta-isomerase (369 aa).

Residue arginine 9 to lysine 10 coordinates substrate. FMN contacts are provided by residues threonine 65, glycine 66–threonine 68, serine 96, and asparagine 125. Residue serine 96–arginine 98 participates in substrate binding. Glutamine 160 serves as a coordination point for substrate. Glutamate 161 lines the Mg(2+) pocket. Residues lysine 193, serine 218, threonine 223, glycine 275–arginine 277, and alanine 296–leucine 297 contribute to the FMN site.

This sequence belongs to the IPP isomerase type 2 family. In terms of assembly, homooctamer. Dimer of tetramers. It depends on FMN as a cofactor. NADPH serves as cofactor. Requires Mg(2+) as cofactor.

It localises to the cytoplasm. It carries out the reaction isopentenyl diphosphate = dimethylallyl diphosphate. Its function is as follows. Involved in the biosynthesis of isoprenoids. Catalyzes the 1,3-allylic rearrangement of the homoallylic substrate isopentenyl (IPP) to its allylic isomer, dimethylallyl diphosphate (DMAPP). The chain is Isopentenyl-diphosphate delta-isomerase from Sulfurisphaera tokodaii (strain DSM 16993 / JCM 10545 / NBRC 100140 / 7) (Sulfolobus tokodaii).